A 194-amino-acid chain; its full sequence is dTTP/UTP pyrophosphatase (194 aa).

The Proton acceptor role is filled by Asp-73.

This sequence belongs to the Maf family. YhdE subfamily. A divalent metal cation is required as a cofactor.

It localises to the cytoplasm. It carries out the reaction dTTP + H2O = dTMP + diphosphate + H(+). It catalyses the reaction UTP + H2O = UMP + diphosphate + H(+). Nucleoside triphosphate pyrophosphatase that hydrolyzes dTTP and UTP. May have a dual role in cell division arrest and in preventing the incorporation of modified nucleotides into cellular nucleic acids. This Clostridium botulinum (strain Okra / Type B1) protein is dTTP/UTP pyrophosphatase.